The primary structure comprises 495 residues: WD repeat-containing protein 37 (495 aa).

The interval 1 to 34 (MPTESGSWAAARQTKQKRKSHSLSIKRTNSSEQD) is disordered. Positions 22-31 (SLSIKRTNSS) are enriched in polar residues. WD repeat units follow at residues 154 to 194 (GHRD…CLIK) and 197 to 236 (GHAG…PTPQ). Residues 237–268 (PMADTSQISGEEEVDFSDKDENDGDGDASSDC) form a disordered region. Positions 246–264 (GEEEVDFSDKDENDGDGDA) are enriched in acidic residues. WD repeat units follow at residues 280-319 (SHQG…LVHS), 322-361 (GHDQ…IHSV), 366-404 (GHTD…SPIA), 407-446 (RTDS…LARL), and 453-494 (GHRR…LLQE).

It is found in the cytoplasm. The protein resides in the nucleus. This chain is WD repeat-containing protein 37 (wdr37), found in Xenopus laevis (African clawed frog).